We begin with the raw amino-acid sequence, 445 residues long: Phosphoglucosamine mutase (445 aa).

The Phosphoserine intermediate role is filled by S99. Mg(2+) contacts are provided by S99, D242, D244, and D246. Position 99 is a phosphoserine (S99).

The protein belongs to the phosphohexose mutase family. The cofactor is Mg(2+). In terms of processing, activated by phosphorylation.

It catalyses the reaction alpha-D-glucosamine 1-phosphate = D-glucosamine 6-phosphate. Catalyzes the conversion of glucosamine-6-phosphate to glucosamine-1-phosphate. The sequence is that of Phosphoglucosamine mutase from Sulfurovum sp. (strain NBC37-1).